A 259-amino-acid polypeptide reads, in one-letter code: Imidazole glycerol phosphate synthase subunit HisF (259 aa).

Catalysis depends on residues Asp-11 and Asp-130.

The protein belongs to the HisA/HisF family. In terms of assembly, heterodimer of HisH and HisF.

It is found in the cytoplasm. It carries out the reaction 5-[(5-phospho-1-deoxy-D-ribulos-1-ylimino)methylamino]-1-(5-phospho-beta-D-ribosyl)imidazole-4-carboxamide + L-glutamine = D-erythro-1-(imidazol-4-yl)glycerol 3-phosphate + 5-amino-1-(5-phospho-beta-D-ribosyl)imidazole-4-carboxamide + L-glutamate + H(+). It functions in the pathway amino-acid biosynthesis; L-histidine biosynthesis; L-histidine from 5-phospho-alpha-D-ribose 1-diphosphate: step 5/9. IGPS catalyzes the conversion of PRFAR and glutamine to IGP, AICAR and glutamate. The HisF subunit catalyzes the cyclization activity that produces IGP and AICAR from PRFAR using the ammonia provided by the HisH subunit. This is Imidazole glycerol phosphate synthase subunit HisF from Syntrophobacter fumaroxidans (strain DSM 10017 / MPOB).